Here is a 456-residue protein sequence, read N- to C-terminus: tRNA modification GTPase MnmE (456 aa).

3 residues coordinate (6S)-5-formyl-5,6,7,8-tetrahydrofolate: Arg-24, Glu-81, and Lys-120. A TrmE-type G domain is found at 216–379; the sequence is GMTVVIAGRP…LREHLKACMG (164 aa). K(+) is bound at residue Asn-226. Residues 226–231, 245–251, 270–273, 335–338, and 359–361 contribute to the GTP site; these read NAGKSS, TEIAGTT, DTAG, NKAD, and SAR. Residue Ser-230 participates in Mg(2+) binding. Residues Thr-245, Ile-247, and Thr-250 each contribute to the K(+) site. Position 251 (Thr-251) interacts with Mg(2+). Lys-456 provides a ligand contact to (6S)-5-formyl-5,6,7,8-tetrahydrofolate.

This sequence belongs to the TRAFAC class TrmE-Era-EngA-EngB-Septin-like GTPase superfamily. TrmE GTPase family. As to quaternary structure, homodimer. Heterotetramer of two MnmE and two MnmG subunits. It depends on K(+) as a cofactor.

The protein localises to the cytoplasm. In terms of biological role, exhibits a very high intrinsic GTPase hydrolysis rate. Involved in the addition of a carboxymethylaminomethyl (cmnm) group at the wobble position (U34) of certain tRNAs, forming tRNA-cmnm(5)s(2)U34. This Pseudomonas syringae pv. syringae (strain B728a) protein is tRNA modification GTPase MnmE.